Reading from the N-terminus, the 333-residue chain is Phosphate acyltransferase (333 aa).

This sequence belongs to the PlsX family. In terms of assembly, homodimer. Probably interacts with PlsY.

The protein localises to the cytoplasm. It catalyses the reaction a fatty acyl-[ACP] + phosphate = an acyl phosphate + holo-[ACP]. The protein operates within lipid metabolism; phospholipid metabolism. Its function is as follows. Catalyzes the reversible formation of acyl-phosphate (acyl-PO(4)) from acyl-[acyl-carrier-protein] (acyl-ACP). This enzyme utilizes acyl-ACP as fatty acyl donor, but not acyl-CoA. The polypeptide is Phosphate acyltransferase (Pelagibacter ubique (strain HTCC1062)).